A 513-amino-acid polypeptide reads, in one-letter code: Histidine ammonia-lyase (513 aa).

The segment at residues 144–146 is a cross-link (5-imidazolinone (Ala-Gly)); sequence ASG. Residue serine 145 is modified to 2,3-didehydroalanine (Ser).

This sequence belongs to the PAL/histidase family. Contains an active site 4-methylidene-imidazol-5-one (MIO), which is formed autocatalytically by cyclization and dehydration of residues Ala-Ser-Gly.

The protein resides in the cytoplasm. The catalysed reaction is L-histidine = trans-urocanate + NH4(+). It functions in the pathway amino-acid degradation; L-histidine degradation into L-glutamate; N-formimidoyl-L-glutamate from L-histidine: step 1/3. This chain is Histidine ammonia-lyase, found in Streptococcus pyogenes serotype M3 (strain ATCC BAA-595 / MGAS315).